A 116-amino-acid chain; its full sequence is Ribosome-binding factor A (116 aa).

It belongs to the RbfA family. As to quaternary structure, monomer. Binds 30S ribosomal subunits, but not 50S ribosomal subunits or 70S ribosomes.

The protein resides in the cytoplasm. One of several proteins that assist in the late maturation steps of the functional core of the 30S ribosomal subunit. Associates with free 30S ribosomal subunits (but not with 30S subunits that are part of 70S ribosomes or polysomes). Required for efficient processing of 16S rRNA. May interact with the 5'-terminal helix region of 16S rRNA. The chain is Ribosome-binding factor A from Ureaplasma urealyticum serovar 10 (strain ATCC 33699 / Western).